The primary structure comprises 930 residues: Type I restriction enzyme SsaAORF53P endonuclease subunit (930 aa).

The 165-residue stretch at 254–418 folds into the Helicase ATP-binding domain; sequence HQATETSNNG…DGRSTADIFG (165 aa). Residue 268–274 coordinates ATP; the sequence is TTGSGKT.

It belongs to the HsdR family. The type I restriction/modification system is composed of three polypeptides R, M and S.

It carries out the reaction Endonucleolytic cleavage of DNA to give random double-stranded fragments with terminal 5'-phosphates, ATP is simultaneously hydrolyzed.. The restriction (R) subunit of a type I restriction enzyme that recognizes an undetermined sequence and cleaves a random distance away. Subunit R is required for both nuclease and ATPase activities, but not for modification. After locating a non-methylated recognition site, the enzyme complex serves as a molecular motor that translocates DNA in an ATP-dependent manner until a collision occurs that triggers cleavage. In Staphylococcus saprophyticus subsp. saprophyticus (strain ATCC 15305 / DSM 20229 / NCIMB 8711 / NCTC 7292 / S-41), this protein is Type I restriction enzyme SsaAORF53P endonuclease subunit.